The primary structure comprises 179 residues: uncharacterized protein (179 aa).

The N-terminal stretch at 1–19 (MNTNVFRLLLLGSLFSLSA) is a signal peptide. Cysteine 20 is lipidated: N-palmitoyl cysteine. Cysteine 20 carries the S-diacylglycerol cysteine lipid modification.

It is found in the cell membrane. This is an uncharacterized protein from Escherichia coli (strain K12).